The chain runs to 158 residues: Protein SREK1IP1 (158 aa).

Disordered regions lie at residues 1-20 (MAAPGPNKDNIRAGCKRCGY) and 45-158 (SSTS…SDTD). The CCHC-type zinc-finger motif lies at 13–30 (AGCKRCGYPGHLTFECRN). The span at 59 to 79 (ALSKEKIFGSHSKGSQEDSRK) shows a compositional bias: basic and acidic residues. Basic residues-rich tracts occupy residues 80 to 98 (EKHKKKSKERSRGKAKKRS) and 111 to 140 (KKKKKRKSNKKKGKKEKREKERKHKKKQKK). Positions 145-158 (SSSSDSSSESSDTD) are enriched in low complexity.

Its function is as follows. Possible splicing regulator involved in the control of cellular survival. The protein is Protein SREK1IP1 (srek1ip1) of Danio rerio (Zebrafish).